The sequence spans 570 residues: Sulfite reductase [NADPH] hemoprotein beta-component (570 aa).

Positions 434, 440, 479, and 483 each coordinate [4Fe-4S] cluster. A siroheme-binding site is contributed by Cys-483.

This sequence belongs to the nitrite and sulfite reductase 4Fe-4S domain family. As to quaternary structure, alpha(8)-beta(8). The alpha component is a flavoprotein, the beta component is a hemoprotein. Siroheme is required as a cofactor. The cofactor is [4Fe-4S] cluster.

The enzyme catalyses hydrogen sulfide + 3 NADP(+) + 3 H2O = sulfite + 3 NADPH + 4 H(+). It participates in sulfur metabolism; hydrogen sulfide biosynthesis; hydrogen sulfide from sulfite (NADPH route): step 1/1. Its function is as follows. Component of the sulfite reductase complex that catalyzes the 6-electron reduction of sulfite to sulfide. This is one of several activities required for the biosynthesis of L-cysteine from sulfate. In Salmonella agona (strain SL483), this protein is Sulfite reductase [NADPH] hemoprotein beta-component.